A 937-amino-acid polypeptide reads, in one-letter code: Periplasmic nitrate reductase (937 aa).

The tat-type signal signal peptide spans 1 to 31; it reads MSMNRREFLKTTAAAAAASAVGISIPSEAKA. A 4Fe-4S Mo/W bis-MGD-type domain is found at 40–96; the sequence is WQWDKAVCRFCGTGCGIMVAVKDDKIVAVKGDPESPVNRGINCIKGYFNAKIMYGAD. Positions 47, 50, 54, and 82 each coordinate [4Fe-4S] cluster. Mo-bis(molybdopterin guanine dinucleotide) is bound by residues Lys84, Gln152, Asn177, Cys181, 214–221, Met422, Gln426, Asn532, Lys580, Asp607, and 827–836; these read WGANMAEM and TGRVLEHWHS. Trp903 is a substrate binding site. Positions 911 and 928 each coordinate Mo-bis(molybdopterin guanine dinucleotide).

Belongs to the prokaryotic molybdopterin-containing oxidoreductase family. NasA/NapA/NarB subfamily. As to quaternary structure, component of the periplasmic nitrate reductase NapAB complex composed of NapA and NapB. Requires [4Fe-4S] cluster as cofactor. Mo-bis(molybdopterin guanine dinucleotide) serves as cofactor. Post-translationally, predicted to be exported by the Tat system. The position of the signal peptide cleavage has not been experimentally proven.

It is found in the periplasm. It catalyses the reaction 2 Fe(II)-[cytochrome] + nitrate + 2 H(+) = 2 Fe(III)-[cytochrome] + nitrite + H2O. Functionally, catalytic subunit of the periplasmic nitrate reductase complex NapAB. Receives electrons from NapB and catalyzes the reduction of nitrate to nitrite. The sequence is that of Periplasmic nitrate reductase from Nautilia profundicola (strain ATCC BAA-1463 / DSM 18972 / AmH).